Reading from the N-terminus, the 431-residue chain is uncharacterized protein (431 aa).

Disordered stretches follow at residues 1–37 (MFWR…KLTP) and 102–132 (PPPL…RRVA). Basic and acidic residues predominate over residues 22-32 (GDFRRSSDPRL). Residues 106-121 (LSAGASRESAPRQPGP) show a composition bias toward low complexity. Residues 122 to 132 (GERERPRRRVA) show a composition bias toward basic and acidic residues.

It localises to the cytoplasm. This is an uncharacterized protein from Homo sapiens (Human).